A 227-amino-acid polypeptide reads, in one-letter code: ATP synthase F(0) complex subunit a (227 aa).

Helical transmembrane passes span 14 to 34 (LLGH…FPSP), 69 to 89 (WALM…LGLL), 98 to 118 (QLSM…LTGL), 139 to 159 (IPAL…ALGV), 167 to 187 (AGHL…PILP), and 190 to 210 (SILT…VAMI).

The protein belongs to the ATPase A chain family. As to quaternary structure, component of the ATP synthase complex composed at least of ATP5F1A/subunit alpha, ATP5F1B/subunit beta, ATP5MC1/subunit c (homooctomer), MT-ATP6/subunit a, MT-ATP8/subunit 8, ATP5ME/subunit e, ATP5MF/subunit f, ATP5MG/subunit g, ATP5MK/subunit k, ATP5MJ/subunit j, ATP5F1C/subunit gamma, ATP5F1D/subunit delta, ATP5F1E/subunit epsilon, ATP5PF/subunit F6, ATP5PB/subunit b, ATP5PD/subunit d, ATP5PO/subunit OSCP. ATP synthase complex consists of a soluble F(1) head domain (subunits alpha(3) and beta(3)) - the catalytic core - and a membrane F(0) domain - the membrane proton channel (subunits c, a, 8, e, f, g, k and j). These two domains are linked by a central stalk (subunits gamma, delta, and epsilon) rotating inside the F1 region and a stationary peripheral stalk (subunits F6, b, d, and OSCP). Interacts with DNAJC30; interaction is direct.

The protein localises to the mitochondrion inner membrane. It carries out the reaction H(+)(in) = H(+)(out). In terms of biological role, subunit a, of the mitochondrial membrane ATP synthase complex (F(1)F(0) ATP synthase or Complex V) that produces ATP from ADP in the presence of a proton gradient across the membrane which is generated by electron transport complexes of the respiratory chain. ATP synthase complex consist of a soluble F(1) head domain - the catalytic core - and a membrane F(1) domain - the membrane proton channel. These two domains are linked by a central stalk rotating inside the F(1) region and a stationary peripheral stalk. During catalysis, ATP synthesis in the catalytic domain of F(1) is coupled via a rotary mechanism of the central stalk subunits to proton translocation. With the subunit c (ATP5MC1), forms the proton-conducting channel in the F(0) domain, that contains two crucial half-channels (inlet and outlet) that facilitate proton movement from the mitochondrial intermembrane space (IMS) into the matrix. Protons are taken up via the inlet half-channel and released through the outlet half-channel, following a Grotthuss mechanism. This is ATP synthase F(0) complex subunit a from Anas platyrhynchos (Mallard).